A 1271-amino-acid chain; its full sequence is Chitin synthase 4 (1271 aa).

2 disordered regions span residues 1–45 (MPPT…SFDH) and 58–117 (PNHP…ERPS). The span at 21 to 30 (APDTQESSPA) shows a compositional bias: polar residues. The next 2 helical transmembrane spans lie at 165-185 (WWIR…LVHL) and 201-221 (LAIF…IIFF). N407 carries N-linked (GlcNAc...) asparagine glycosylation. A helical transmembrane segment spans residues 473–493 (LLLAFSIILIATIASKFLAAL). 2 N-linked (GlcNAc...) asparagine glycosylation sites follow: N713 and N836. The next 3 helical transmembrane spans lie at 867–887 (LLGT…VIVV), 894–914 (IPVI…LIFI), and 919–939 (FMLI…SVFL). The tract at residues 999–1081 (HSESPAPSEK…DKSFIRGSKP (83 aa)) is disordered. The segment covering 1027–1037 (RSPSFHSSASE) has biased composition (polar residues). 2 N-linked (GlcNAc...) asparagine glycosylation sites follow: N1055 and N1161. Residues 1213–1269 (EVQDEEVLDKLKTWLSKQDLMSVTKRQTREAIYTLFPNAGLQNRAGWLNEQIDKILS) enclose the DEK-C domain.

This sequence belongs to the chitin synthase family.

Its subcellular location is the cell membrane. It catalyses the reaction [(1-&gt;4)-N-acetyl-beta-D-glucosaminyl](n) + UDP-N-acetyl-alpha-D-glucosamine = [(1-&gt;4)-N-acetyl-beta-D-glucosaminyl](n+1) + UDP + H(+). In terms of biological role, polymerizes chitin, a structural polymer of the cell wall and septum, by transferring the sugar moiety of UDP-GlcNAc to the non-reducing end of the growing chitin polymer. Produces a large proportion of the chitin that is not deacetylated to chitosan. This is Chitin synthase 4 from Cryptococcus neoformans var. grubii serotype A (strain H99 / ATCC 208821 / CBS 10515 / FGSC 9487) (Filobasidiella neoformans var. grubii).